The sequence spans 332 residues: Fructose-1,6-bisphosphatase class 1 (332 aa).

Mg(2+) contacts are provided by Glu-89, Asp-110, Leu-112, and Asp-113. Residues 113–116, Asn-206, Tyr-239, 257–259, and Lys-269 contribute to the substrate site; these read DGSS and YLY. Glu-275 is a binding site for Mg(2+).

The protein belongs to the FBPase class 1 family. Homotetramer. Mg(2+) is required as a cofactor.

It is found in the cytoplasm. It catalyses the reaction beta-D-fructose 1,6-bisphosphate + H2O = beta-D-fructose 6-phosphate + phosphate. It participates in carbohydrate biosynthesis; gluconeogenesis. This chain is Fructose-1,6-bisphosphatase class 1, found in Cronobacter sakazakii (strain ATCC BAA-894) (Enterobacter sakazakii).